The chain runs to 1070 residues: DNA-directed RNA polymerase subunit beta (1070 aa).

The protein belongs to the RNA polymerase beta chain family. As to quaternary structure, in plastids the minimal PEP RNA polymerase catalytic core is composed of four subunits: alpha, beta, beta', and beta''. When a (nuclear-encoded) sigma factor is associated with the core the holoenzyme is formed, which can initiate transcription.

Its subcellular location is the plastid. The protein resides in the chloroplast. The catalysed reaction is RNA(n) + a ribonucleoside 5'-triphosphate = RNA(n+1) + diphosphate. DNA-dependent RNA polymerase catalyzes the transcription of DNA into RNA using the four ribonucleoside triphosphates as substrates. In Chloranthus spicatus (Chulantree), this protein is DNA-directed RNA polymerase subunit beta.